Consider the following 239-residue polypeptide: Transcriptional regulatory protein RstA (239 aa).

In terms of domain architecture, Response regulatory spans 3–116 (TIVFVEDDAE…VLLARLRLHL (114 aa)). At Asp52 the chain carries 4-aspartylphosphate. Positions 136-235 (YKALHFGTLT…VRNKGYLFAP (100 aa)) form a DNA-binding region, ompR/PhoB-type.

Phosphorylated by RstB.

It is found in the cytoplasm. Member of the two-component regulatory system RstB/RstA. This is Transcriptional regulatory protein RstA (rstA) from Escherichia coli (strain K12).